Consider the following 887-residue polypeptide: Bifunctional uridylyltransferase/uridylyl-removing enzyme (887 aa).

The uridylyltransferase stretch occupies residues 1 to 337 (MINTSPLLNY…RLPNYERKIE (337 aa)). Positions 339 to 699 (VNDHFKIVDN…AHRKAAQDAV (361 aa)) are uridylyl-removing. In terms of domain architecture, HD spans 457 to 579 (VDAHTLLLLR…LGDMEHLDYL (123 aa)). 2 consecutive ACT domains span residues 700 to 782 (QIFI…LMQR) and 809 to 887 (MVEI…ICQH).

Belongs to the GlnD family. It depends on Mg(2+) as a cofactor.

It catalyses the reaction [protein-PII]-L-tyrosine + UTP = [protein-PII]-uridylyl-L-tyrosine + diphosphate. The catalysed reaction is [protein-PII]-uridylyl-L-tyrosine + H2O = [protein-PII]-L-tyrosine + UMP + H(+). Its activity is regulated as follows. Uridylyltransferase (UTase) activity is inhibited by glutamine, while glutamine activates uridylyl-removing (UR) activity. Its function is as follows. Modifies, by uridylylation and deuridylylation, the PII regulatory proteins (GlnB and homologs), in response to the nitrogen status of the cell that GlnD senses through the glutamine level. Under low glutamine levels, catalyzes the conversion of the PII proteins and UTP to PII-UMP and PPi, while under higher glutamine levels, GlnD hydrolyzes PII-UMP to PII and UMP (deuridylylation). Thus, controls uridylylation state and activity of the PII proteins, and plays an important role in the regulation of nitrogen assimilation and metabolism. This is Bifunctional uridylyltransferase/uridylyl-removing enzyme from Acinetobacter baumannii (strain AB307-0294).